The sequence spans 264 residues: 4-hydroxy-tetrahydrodipicolinate reductase (264 aa).

Residue 8–13 participates in NAD(+) binding; the sequence is GPRGKM. Lysine 36 is a binding site for NADP(+). NAD(+) is bound by residues 97–99 and 123–126; these read GTT and APNF. The Proton donor/acceptor role is filled by histidine 153. Histidine 154 is a (S)-2,3,4,5-tetrahydrodipicolinate binding site. The active-site Proton donor is lysine 157. 163–164 contributes to the (S)-2,3,4,5-tetrahydrodipicolinate binding site; sequence GT.

Belongs to the DapB family.

The protein resides in the cytoplasm. It carries out the reaction (S)-2,3,4,5-tetrahydrodipicolinate + NAD(+) + H2O = (2S,4S)-4-hydroxy-2,3,4,5-tetrahydrodipicolinate + NADH + H(+). The catalysed reaction is (S)-2,3,4,5-tetrahydrodipicolinate + NADP(+) + H2O = (2S,4S)-4-hydroxy-2,3,4,5-tetrahydrodipicolinate + NADPH + H(+). The protein operates within amino-acid biosynthesis; L-lysine biosynthesis via DAP pathway; (S)-tetrahydrodipicolinate from L-aspartate: step 4/4. Catalyzes the conversion of 4-hydroxy-tetrahydrodipicolinate (HTPA) to tetrahydrodipicolinate. This Halalkalibacterium halodurans (strain ATCC BAA-125 / DSM 18197 / FERM 7344 / JCM 9153 / C-125) (Bacillus halodurans) protein is 4-hydroxy-tetrahydrodipicolinate reductase.